A 460-amino-acid polypeptide reads, in one-letter code: Cysteine--tRNA ligase (460 aa).

Residue Cys-28 coordinates Zn(2+). Residues Met-30–His-40 carry the 'HIGH' region motif. Positions 209, 234, and 238 each coordinate Zn(2+). The 'KMSKS' region signature appears at Lys-266 to Ser-270. Position 269 (Lys-269) interacts with ATP.

It belongs to the class-I aminoacyl-tRNA synthetase family. Monomer. Zn(2+) serves as cofactor.

The protein resides in the cytoplasm. It catalyses the reaction tRNA(Cys) + L-cysteine + ATP = L-cysteinyl-tRNA(Cys) + AMP + diphosphate. In Pseudomonas entomophila (strain L48), this protein is Cysteine--tRNA ligase.